A 295-amino-acid polypeptide reads, in one-letter code: Pyridoxal 5'-phosphate synthase subunit PdxS (295 aa).

Asp-25 contributes to the D-ribose 5-phosphate binding site. Lys-82 functions as the Schiff-base intermediate with D-ribose 5-phosphate in the catalytic mechanism. Residue Gly-154 coordinates D-ribose 5-phosphate. Arg-166 lines the D-glyceraldehyde 3-phosphate pocket. D-ribose 5-phosphate contacts are provided by residues Gly-215 and 236-237 (GS).

The protein belongs to the PdxS/SNZ family. As to quaternary structure, in the presence of PdxT, forms a dodecamer of heterodimers.

The catalysed reaction is aldehydo-D-ribose 5-phosphate + D-glyceraldehyde 3-phosphate + L-glutamine = pyridoxal 5'-phosphate + L-glutamate + phosphate + 3 H2O + H(+). It participates in cofactor biosynthesis; pyridoxal 5'-phosphate biosynthesis. Its function is as follows. Catalyzes the formation of pyridoxal 5'-phosphate from ribose 5-phosphate (RBP), glyceraldehyde 3-phosphate (G3P) and ammonia. The ammonia is provided by the PdxT subunit. Can also use ribulose 5-phosphate and dihydroxyacetone phosphate as substrates, resulting from enzyme-catalyzed isomerization of RBP and G3P, respectively. This is Pyridoxal 5'-phosphate synthase subunit PdxS from Natranaerobius thermophilus (strain ATCC BAA-1301 / DSM 18059 / JW/NM-WN-LF).